A 356-amino-acid chain; its full sequence is MLVLGIESSCDETGVALVDTSASPTPCLLAHALYSQIAMHQPYGGVVPELASRDHIRRVLPLTQDVMKSAQHTLADVDVIAYTRGPGLAGALLVGAGVACSLAAALGKPAMGVHHLEGHLLSPFLSADPPEFPFVALLVSGGHTQLMRVDRVGSYELLGETIDDAAGEAFDKSAKLMGMPYPGGPHLARLALGGDGAAFKLPRPLLHSGNLDFSFAGLKTAVLTQAKKLGTELESRKADLAASTQAAIVEVLVKKTLAALSQTALKRLVVAGGVGANALLRSQLNAACQQRGIRVHYPELEFCTDNGAMIAMAAGMRLQAGLVNLDALRGSYTFDVKPRWNLSEFQSEPALATQNA.

Histidine 115 and histidine 119 together coordinate Fe cation. Substrate-binding positions include leucine 138–glycine 142, aspartate 171, glycine 184, and asparagine 277. A Fe cation-binding site is contributed by aspartate 305.

This sequence belongs to the KAE1 / TsaD family. Fe(2+) is required as a cofactor.

The protein localises to the cytoplasm. The enzyme catalyses L-threonylcarbamoyladenylate + adenosine(37) in tRNA = N(6)-L-threonylcarbamoyladenosine(37) in tRNA + AMP + H(+). In terms of biological role, required for the formation of a threonylcarbamoyl group on adenosine at position 37 (t(6)A37) in tRNAs that read codons beginning with adenine. Is involved in the transfer of the threonylcarbamoyl moiety of threonylcarbamoyl-AMP (TC-AMP) to the N6 group of A37, together with TsaE and TsaB. TsaD likely plays a direct catalytic role in this reaction. This chain is tRNA N6-adenosine threonylcarbamoyltransferase, found in Polaromonas naphthalenivorans (strain CJ2).